The sequence spans 164 residues: S-ribosylhomocysteine lyase (164 aa).

Fe cation is bound by residues H61, H65, and C131.

The protein belongs to the LuxS family. In terms of assembly, homodimer. Fe cation is required as a cofactor.

It catalyses the reaction S-(5-deoxy-D-ribos-5-yl)-L-homocysteine = (S)-4,5-dihydroxypentane-2,3-dione + L-homocysteine. Functionally, involved in the synthesis of autoinducer 2 (AI-2) which is secreted by bacteria and is used to communicate both the cell density and the metabolic potential of the environment. The regulation of gene expression in response to changes in cell density is called quorum sensing. Catalyzes the transformation of S-ribosylhomocysteine (RHC) to homocysteine (HC) and 4,5-dihydroxy-2,3-pentadione (DPD). The sequence is that of S-ribosylhomocysteine lyase from Bifidobacterium longum (strain DJO10A).